Here is a 506-residue protein sequence, read N- to C-terminus: RNA-splicing ligase RtcB homolog (506 aa).

Residues Asp-120, Cys-123, His-228, His-260, and His-354 each coordinate Mn(2+). Position 227-231 (227-231) interacts with GMP; sequence NHYAE. GMP is bound by residues 354–355, 403–406, Ser-410, 429–432, and Lys-505; these read HN, GGTM, and HGAG. Catalysis depends on His-429, which acts as the GMP-histidine intermediate.

This sequence belongs to the RtcB family. In terms of assembly, catalytic component of the tRNA-splicing ligase complex. It depends on Mn(2+) as a cofactor.

It catalyses the reaction a 3'-end 3'-phospho-ribonucleotide-RNA + a 5'-end dephospho-ribonucleoside-RNA + GTP = a ribonucleotidyl-ribonucleotide-RNA + GMP + diphosphate. The catalysed reaction is a 3'-end 2',3'-cyclophospho-ribonucleotide-RNA + a 5'-end dephospho-ribonucleoside-RNA + GTP + H2O = a ribonucleotidyl-ribonucleotide-RNA + GMP + diphosphate + H(+). Its function is as follows. Catalytic subunit of the tRNA-splicing ligase complex that acts by directly joining spliced tRNA halves to mature-sized tRNAs by incorporating the precursor-derived splice junction phosphate into the mature tRNA as a canonical 3',5'-phosphodiester. May act as an RNA ligase with broad substrate specificity, and may function toward other RNAs. The protein is RNA-splicing ligase RtcB homolog of Plasmodium falciparum (isolate 3D7).